A 92-amino-acid chain; its full sequence is U21-hexatoxin-Hi1a (92 aa).

A signal peptide spans 1 to 19; that stretch reads MKTILSMLIFVALFAAIVG. 4 disulfides stabilise this stretch: Cys41-Cys55, Cys48-Cys67, Cys54-Cys82, and Cys85-Cys92.

The protein belongs to the neurotoxin 21 family. Expressed by the venom gland.

It localises to the secreted. In terms of biological role, potent insecticidal toxin with probable ion channel impairing activity. In vivo, reversibly paralyzes all flies within 30 minutes, even at low dose (0.3 nmol/g). The sequence is that of U21-hexatoxin-Hi1a from Hadronyche infensa (Fraser island funnel-web spider).